The chain runs to 222 residues: MPLFQNATFFTTVNHLRDLPPTSAEIAFVGRSNAGKSSAINALANRTRLAYVSKTPGRTQHINFFRLASHFDYFLVDLPGYGYAEVPESVRAHWVELLGRYLQTRESLIGLLLIMDARHPLKELDMRMLDFFRMRGQPVHILLSKSDKMNRQEQNKTLATVRQALAGYPQVSIQLFSSSKKQGLEQVETVVAGWFAGLEARQADELTDGEPDDRTPDPDSAS.

The EngB-type G domain occupies 22–197 (TSAEIAFVGR…ETVVAGWFAG (176 aa)). Positions 37 and 59 each coordinate Mg(2+). Residues 201 to 222 (RQADELTDGEPDDRTPDPDSAS) are disordered. The segment covering 212–222 (DDRTPDPDSAS) has biased composition (basic and acidic residues).

This sequence belongs to the TRAFAC class TrmE-Era-EngA-EngB-Septin-like GTPase superfamily. EngB GTPase family. Mg(2+) serves as cofactor.

Functionally, necessary for normal cell division and for the maintenance of normal septation. This Laribacter hongkongensis (strain HLHK9) protein is Probable GTP-binding protein EngB.